The following is a 310-amino-acid chain: Probable manganese-dependent inorganic pyrophosphatase (310 aa).

The Mn(2+) site is built by histidine 9, aspartate 13, aspartate 15, aspartate 76, histidine 98, and aspartate 150.

Belongs to the PPase class C family. The cofactor is Mn(2+).

It is found in the cytoplasm. It carries out the reaction diphosphate + H2O = 2 phosphate + H(+). The sequence is that of Probable manganese-dependent inorganic pyrophosphatase from Streptococcus thermophilus (strain ATCC BAA-491 / LMD-9).